We begin with the raw amino-acid sequence, 631 residues long: tRNA uridine 5-carboxymethylaminomethyl modification enzyme MnmG (631 aa).

FAD is bound by residues 13 to 18 (GGGHAG), valine 125, and serine 180. 273-287 (GPRYCPSIEDKVNRY) is a binding site for NAD(+). Position 370 (glutamine 370) interacts with FAD.

The protein belongs to the MnmG family. In terms of assembly, homodimer. Heterotetramer of two MnmE and two MnmG subunits. The cofactor is FAD.

It is found in the cytoplasm. NAD-binding protein involved in the addition of a carboxymethylaminomethyl (cmnm) group at the wobble position (U34) of certain tRNAs, forming tRNA-cmnm(5)s(2)U34. This chain is tRNA uridine 5-carboxymethylaminomethyl modification enzyme MnmG, found in Alcanivorax borkumensis (strain ATCC 700651 / DSM 11573 / NCIMB 13689 / SK2).